Consider the following 687-residue polypeptide: Protein-glutamine gamma-glutamyltransferase 2 (687 aa).

An N-acetylalanine modification is found at Ala2. 2 cysteine pairs are disulfide-bonded: Cys230-Cys370 and Cys370-Cys371. Active-site residues include Cys277, His335, and Asp358. Residues Asn398, Asp400, Glu437, Glu447, and Glu452 each coordinate Ca(2+). Position 468 is an N6-acetyllysine (Lys468). Residue 476 to 483 (RIRVGEGM) coordinates GTP. Glu539 contributes to the Ca(2+) binding site. GTP is bound at residue 580-583 (RDIY). Gln633 participates in a covalent cross-link: Isoglutamyl lysine isopeptide (Gln-Lys) (interchain with K-?).

This sequence belongs to the transglutaminase superfamily. Transglutaminase family. Monomer. Interacts with phospholipase C; promoting alpha-1 adrenergic receptor signaling. Interacts with PLCD1. Ca(2+) is required as a cofactor. Post-translationally, disulfide bond formation inactivates the calcium-dependent acyltransferase activity. Cys-370 can form disulfide bonds with both Cys-230 and Cys-371: formation of a disulfide bond between Cys-230 and Cys-370 facilitates formation of the disulfide between Cys-370 and Cys-371, which promotes inactivation of the acyltransferase activity. May also form interchain disulfids between Cys-230 and Cys-370. Ca(2+) protects against disulfide bond formation and inactivation. In terms of processing, auto-transglutaminated: Forms covalent cross-links mediated by transglutaminase between Gln-633 and the epsilon-amino group of a lysine residue of itself or HMGB1, forming homopolymers and heteropolymers, respectively. S-nitrosylated, leading to inactivation of the acyltransferase activity. As to expression, highest levels are detected in the lung. Lower levels are found in the liver, spleen and heart, but not in the brain.

The protein resides in the cytoplasm. The protein localises to the cytosol. It is found in the nucleus. Its subcellular location is the chromosome. It localises to the secreted. The protein resides in the extracellular space. The protein localises to the extracellular matrix. It is found in the cell membrane. Its subcellular location is the mitochondrion. It catalyses the reaction L-glutaminyl-[protein] + L-lysyl-[protein] = [protein]-L-lysyl-N(6)-5-L-glutamyl-[protein] + NH4(+). It carries out the reaction L-glutaminyl-[protein] + serotonin = 5-serotonyl-L-glutamyl-[protein] + NH4(+). The enzyme catalyses L-glutaminyl-[protein] + dopamine = 5-dopaminyl-L-glutamyl-[protein] + NH4(+). The catalysed reaction is L-glutaminyl-[protein] + histamine = 5-histaminyl-L-glutamyl-[protein] + NH4(+). It catalyses the reaction L-glutaminyl-[protein] + (R)-noradrenaline = 5-(R)-noradrenalinyl-L-glutamyl-[protein] + NH4(+). It carries out the reaction L-glutaminyl-[protein] + H2O = L-glutamyl-[protein] + NH4(+). Acyltransferase activity is regulated by the binding of GTP and Ca(2+): inactivated by GTP, which stabilizes its closed structure, thereby obstructing the accessibility of substrates to the active sites. In contrast, Ca(2+) acts as a cofactor by inducing conformational change to the active open form. In absence of Ca(2+), Mg(2+) may bind Ca(2+)-binding sites, promoting GTP-binding and subsequent inhibition of the acyltransferase activity. Extracellularly reduced and activated by CLIC3. Calcium-dependent acyltransferase that catalyzes the formation of covalent bonds between peptide-bound glutamine and various primary amines, such as gamma-amino group of peptide-bound lysine, or mono- and polyamines, thereby producing cross-linked or aminated proteins, respectively. Involved in many biological processes, such as bone development, angiogenesis, wound healing, cellular differentiation, chromatin modification and apoptosis. Acts as a protein-glutamine gamma-glutamyltransferase by mediating the cross-linking of proteins, such as ACO2, HSPB6, FN1, HMGB1, RAP1GDS1, SLC25A4/ANT1, SPP1 and WDR54. Under physiological conditions, the protein cross-linking activity is inhibited by GTP; inhibition is relieved by Ca(2+) in response to various stresses. When secreted, catalyzes cross-linking of proteins of the extracellular matrix, such as FN1 and SPP1 resulting in the formation of scaffolds. Plays a key role during apoptosis, both by (1) promoting the cross-linking of cytoskeletal proteins resulting in condensation of the cytoplasm, and by (2) mediating cross-linking proteins of the extracellular matrix, resulting in the irreversible formation of scaffolds that stabilize the integrity of the dying cells before their clearance by phagocytosis, thereby preventing the leakage of harmful intracellular components. In addition to protein cross-linking, can use different monoamine substrates to catalyze a vast array of protein post-translational modifications: mediates aminylation of serotonin, dopamine, noradrenaline or histamine into glutamine residues of target proteins to generate protein serotonylation, dopaminylation, noradrenalinylation or histaminylation, respectively. Mediates protein serotonylation of small GTPases during activation and aggregation of platelets, leading to constitutive activation of these GTPases. Plays a key role in chromatin organization by mediating serotonylation and dopaminylation of histone H3. Catalyzes serotonylation of 'Gln-5' of histone H3 (H3Q5ser) during serotonergic neuron differentiation, thereby facilitating transcription. Acts as a mediator of neurotransmission-independent role of nuclear dopamine in ventral tegmental area (VTA) neurons: catalyzes dopaminylation of 'Gln-5' of histone H3 (H3Q5dop), thereby regulating relapse-related transcriptional plasticity in the reward system. Regulates vein remodeling by mediating serotonylation and subsequent inactivation of ATP2A2/SERCA2. Also acts as a protein deamidase by mediating the side chain deamidation of specific glutamine residues of proteins to glutamate. Catalyzes specific deamidation of protein gliadin, a component of wheat gluten in the diet. May also act as an isopeptidase cleaving the previously formed cross-links. Also able to participate in signaling pathways independently of its acyltransferase activity: acts as a signal transducer in alpha-1 adrenergic receptor-mediated stimulation of phospholipase C-delta (PLCD) activity and is required for coupling alpha-1 adrenergic agonists to the stimulation of phosphoinositide lipid metabolism. This is Protein-glutamine gamma-glutamyltransferase 2 from Bos taurus (Bovine).